We begin with the raw amino-acid sequence, 458 residues long: Tol-Pal system protein TolB (458 aa).

Residues 1-23 form the signal peptide; that stretch reads MSSVIRKWALTALMAVSSTALFA.

The protein belongs to the TolB family. The Tol-Pal system is composed of five core proteins: the inner membrane proteins TolA, TolQ and TolR, the periplasmic protein TolB and the outer membrane protein Pal. They form a network linking the inner and outer membranes and the peptidoglycan layer.

It is found in the periplasm. Part of the Tol-Pal system, which plays a role in outer membrane invagination during cell division and is important for maintaining outer membrane integrity. The polypeptide is Tol-Pal system protein TolB (Zymomonas mobilis subsp. mobilis (strain ATCC 31821 / ZM4 / CP4)).